A 601-amino-acid polypeptide reads, in one-letter code: Elongation factor 4 (601 aa).

The region spanning 5 to 187 (ENIRNFCIVA…AIITTFPPPK (183 aa)) is the tr-type G domain. Residues 17-22 (DHGKST) and 134-137 (NKID) contribute to the GTP site.

It belongs to the TRAFAC class translation factor GTPase superfamily. Classic translation factor GTPase family. LepA subfamily.

The protein resides in the cell inner membrane. It carries out the reaction GTP + H2O = GDP + phosphate + H(+). Required for accurate and efficient protein synthesis under certain stress conditions. May act as a fidelity factor of the translation reaction, by catalyzing a one-codon backward translocation of tRNAs on improperly translocated ribosomes. Back-translocation proceeds from a post-translocation (POST) complex to a pre-translocation (PRE) complex, thus giving elongation factor G a second chance to translocate the tRNAs correctly. Binds to ribosomes in a GTP-dependent manner. In Treponema denticola (strain ATCC 35405 / DSM 14222 / CIP 103919 / JCM 8153 / KCTC 15104), this protein is Elongation factor 4.